The chain runs to 160 residues: Cytochrome b6-f complex subunit 4 (160 aa).

3 consecutive transmembrane segments (helical) span residues 36–56 (LLYI…GLAV), 95–115 (LLGV…PFLE), and 131–151 (TVFL…TLPI).

The protein belongs to the cytochrome b family. PetD subfamily. In terms of assembly, the 4 large subunits of the cytochrome b6-f complex are cytochrome b6, subunit IV (17 kDa polypeptide, petD), cytochrome f and the Rieske protein, while the 4 small subunits are petG, petL, petM and petN. The complex functions as a dimer.

The protein localises to the plastid. It localises to the chloroplast thylakoid membrane. Its function is as follows. Component of the cytochrome b6-f complex, which mediates electron transfer between photosystem II (PSII) and photosystem I (PSI), cyclic electron flow around PSI, and state transitions. This Oryza nivara (Indian wild rice) protein is Cytochrome b6-f complex subunit 4.